The chain runs to 138 residues: Ribosome-binding factor A (138 aa).

The disordered stretch occupies residues 116–138 (VAQDSQHQEGPASPDAKPESTEE).

The protein belongs to the RbfA family. Monomer. Binds 30S ribosomal subunits, but not 50S ribosomal subunits or 70S ribosomes.

Its subcellular location is the cytoplasm. In terms of biological role, one of several proteins that assist in the late maturation steps of the functional core of the 30S ribosomal subunit. Associates with free 30S ribosomal subunits (but not with 30S subunits that are part of 70S ribosomes or polysomes). Required for efficient processing of 16S rRNA. May interact with the 5'-terminal helix region of 16S rRNA. This is Ribosome-binding factor A from Pseudomonas syringae pv. tomato (strain ATCC BAA-871 / DC3000).